Here is a 102-residue protein sequence, read N- to C-terminus: Small ribosomal subunit protein uS10 (102 aa).

This sequence belongs to the universal ribosomal protein uS10 family. As to quaternary structure, part of the 30S ribosomal subunit.

Involved in the binding of tRNA to the ribosomes. The chain is Small ribosomal subunit protein uS10 from Clostridium novyi (strain NT).